The chain runs to 283 residues: Phosphatidylglycerol--prolipoprotein diacylglyceryl transferase (283 aa).

7 consecutive transmembrane segments (helical) span residues 21–41 (LAIR…LWLA), 60–80 (LLFA…VLFY), 95–115 (VWTG…AMLW), 124–144 (FFTI…AGRL), 176–196 (SQLY…NWFI), 203–223 (GAVS…VEYV), and 239–259 (MGQI…VWAF). Arg-143 lines the a 1,2-diacyl-sn-glycero-3-phospho-(1'-sn-glycerol) pocket.

It belongs to the Lgt family.

The protein resides in the cell inner membrane. It catalyses the reaction L-cysteinyl-[prolipoprotein] + a 1,2-diacyl-sn-glycero-3-phospho-(1'-sn-glycerol) = an S-1,2-diacyl-sn-glyceryl-L-cysteinyl-[prolipoprotein] + sn-glycerol 1-phosphate + H(+). It participates in protein modification; lipoprotein biosynthesis (diacylglyceryl transfer). Catalyzes the transfer of the diacylglyceryl group from phosphatidylglycerol to the sulfhydryl group of the N-terminal cysteine of a prolipoprotein, the first step in the formation of mature lipoproteins. This is Phosphatidylglycerol--prolipoprotein diacylglyceryl transferase from Aliivibrio salmonicida (strain LFI1238) (Vibrio salmonicida (strain LFI1238)).